The sequence spans 946 residues: MLKLLLGDPNARKLKRYQPILTDINLFEDEIASLNDDELRGKTSDFRTRLDKSSDSSIQECLDDLLPEAFAVVREASKRVLGMRHFDVQLIGGMVLHEGQIAEMKTGEGKTLVATLPSFLNALTGRGVHIVTVNDYLARRDAEWMGQVHRFLGLSVGLIQQDMTPIERRKNYECDITYATNSELGFDYLRDNMANDINEIVQRDFQFCIIDEVDSILIDEARTPLIISGQIERPQEKYQKAAEVVSTLQRAAEMGKDGIDPEGDYEVDEKQRTCTLTDEGFAKSEELLKVKDLFDPKDPWAHYITNALKAKELFVKDVNYIVRNEDAVIVDEFTGRVMPGRRWSDGQHQAIEAKEELPIQPETQTLASITYQNFFLLYPRLAGMTGTAKTEEVEFEKTYKLETTVIPTNRPRSRADWVDQVFKTESAKWRAVANETVEIHKKGRPVLVGTTSVEKSEVLSALLGEQDVPHNLLNAKPENVEREAEIIAQAGRAGAVTIATNMAGRGTDIILGGNSDYMARLKVREVLFPKLVKPEDSHKPPVPLQRRKDSSVGFGKEENNSKDKKVNHSNDVRAQENLYPCVLTDSTEQVLLDLEHQLIKEWGDRVLSPIELEDRISTAAEKAPTQDPLVQSLREAISLVKSEYDVVVKQEEVHVREAGGLHVIGTERHESRRVDNQLRGRAGRQGDLGSTRFFLSLGDNLLRIFGGDRVAALMNAFRVDEDMPIESGMLTRSLESAQKKVETYYFDIRKQVFEYDEVMNNQRRAVYSERHRVLEGDELKKQVIGYGERTMQEIVYAYVNPELPSEEWDLKQLVGKVKEFVYLLDDLKPKDIEALNIDELQAFLQEQLRNAYDLKESQIEESRPGLMREAERFFILQQIDTLWREHLQSMDALRESVGLRGYGQKDPLIEYKNEGYDMFLEMMTNMRRNVIYSMFMFQPAPPSDKE.

ATP contacts are provided by residues Q89, 107–111 (GEGKT), and D508. The disordered stretch occupies residues 534-569 (PEDSHKPPVPLQRRKDSSVGFGKEENNSKDKKVNHS). The span at 546 to 569 (RRKDSSVGFGKEENNSKDKKVNHS) shows a compositional bias: basic and acidic residues.

Belongs to the SecA family. In terms of assembly, monomer and homodimer. Part of the essential Sec protein translocation apparatus which comprises SecA, SecYEG and auxiliary proteins SecDF. Other proteins may also be involved.

It localises to the cell inner membrane. The protein localises to the cellular thylakoid membrane. It is found in the cytoplasm. The enzyme catalyses ATP + H2O + cellular proteinSide 1 = ADP + phosphate + cellular proteinSide 2.. Part of the Sec protein translocase complex. Interacts with the SecYEG preprotein conducting channel. Has a central role in coupling the hydrolysis of ATP to the transfer of proteins into and across the cell membrane, serving as an ATP-driven molecular motor driving the stepwise translocation of polypeptide chains across the membrane. Functionally, probably participates in protein translocation into and across both the cytoplasmic and thylakoid membranes in cyanobacterial cells. The protein is Protein translocase subunit SecA of Prochlorococcus marinus (strain SARG / CCMP1375 / SS120).